The primary structure comprises 597 residues: Histidine protein kinase DivJ (597 aa).

6 helical membrane-spanning segments follow: residues 40–57 (LGWL…LFTA), 62–81 (WPVW…SLIF), 91–109 (WLLV…LTGG), 110–125 (VGGA…VAAA), 137–158 (GAAL…GLAP), and 159–188 (AAPT…LLIG). Residues 335-553 (NMSHELRTPL…TVSVRLPVLL (219 aa)) form the Histidine kinase domain. H338 carries the post-translational modification Phosphohistidine; by autocatalysis. Over residues 561–585 (PTPPAAPEAPSAPEPAPTVEEPPPA) the composition is skewed to pro residues. Positions 561–597 (PTPPAAPEAPSAPEPAPTVEEPPPASLGDNVIAFAPR) are disordered.

It localises to the cell membrane. It carries out the reaction ATP + protein L-histidine = ADP + protein N-phospho-L-histidine.. Functionally, kinase required for the regulation of cell division and differentiation. Is part of a signal transduction pathway, activating PleD by phosphorylation. In Caulobacter vibrioides (strain ATCC 19089 / CIP 103742 / CB 15) (Caulobacter crescentus), this protein is Histidine protein kinase DivJ (divJ).